We begin with the raw amino-acid sequence, 691 residues long: Cyclic nucleotide-gated channel alpha-1 (691 aa).

At 1 to 168 (MKKNIINTWY…PAGNMYYNWL (168 aa)) the chain is on the cytoplasmic side. The segment at 31–151 (ENGARSSFSD…KGKDKKEEEK (121 aa)) is disordered. Over residues 39–56 (SDDDGDDDSASMFEESEN) the composition is skewed to acidic residues. Composition is skewed to basic and acidic residues over residues 57–76 (ETPHARDSCRNNSQRRDPSQ) and 112–151 (SKSGDKNENKKDSEKKKKKEKEKEKKNKEEKGKDKKEEEK). Residues 169 to 190 (FCITLPVMYNWTMVIARACFDE) traverse the membrane as a helical segment. Residues 191 to 200 (LQSDYLEYWI) lie on the Extracellular side of the membrane. Residues 201–221 (IFDYLSDIVYLLDMFVRTRTG) traverse the membrane as a helical segment. Topologically, residues 222 to 246 (YLEQGLLVREEAKLIEKYKSNLQFK) are cytoplasmic. A helical transmembrane segment spans residues 247–265 (LDFLSVIPTDLLYFKLGWN). The Extracellular segment spans residues 266–270 (YPEIR). A helical membrane pass occupies residues 271-289 (LNRLLRISRMFEFFQRTET). The Cytoplasmic portion of the chain corresponds to 290–296 (RTNYPNI). Residues 294-402 (PNIFRISNLV…GNIGSMISNM (109 aa)) form an ion conduction pathway region. Residues 297–320 (FRISNLVMYIVIIIHWNACVYFSI) form a helical membrane-spanning segment. Residues 321–343 (SKAIGFGNDTWVYPDVNDPEFGR) are Extracellular-facing. Residue Asn-328 is glycosylated (N-linked (GlcNAc...) asparagine). The next 2 membrane-spanning stretches (helical) occupy residues 344–378 (LARKYVYSLYWSTLTLTTIGETPPPVRDSEYVFVV) and 379–403 (VDFLIGVLIFATIVGNIGSMISNMN). Residues 361 to 364 (TIGE) form a selectivity filter region. The C-linker stretch occupies residues 404 to 480 (AARAEFQARI…DTLKKVRIFA (77 aa)). The Cytoplasmic portion of the chain corresponds to 404–691 (AARAEFQARI…ESRPLDSTQD (288 aa)). The cyclic nucleotide-binding domain stretch occupies residues 484 to 604 (AGLLVELVLK…EEKGKQILMK (121 aa)). 3',5'-cyclic GMP contacts are provided by Gly-544, Ser-547, Arg-560, and Thr-561. 3',5'-cyclic AMP-binding residues include Arg-560 and Thr-561. A coiled-coil region spans residues 622–676 (LEEKVTRMEGSVDLLQTRFARILAEYESMQQKLKQRLTKVERFLKPIIDTEFSAL).

It belongs to the cyclic nucleotide-gated cation channel (TC 1.A.1.5) family. CNGA1 subfamily. As to quaternary structure, forms heterotetrameric channels composed of CNGA1 and CNGB1 subunits with 3:1 stoichiometry. May also form cyclic nucleotide-activated homotetrameric channels, that are efficiently activated by saturating cGMP, but poorly activated by saturating cAMP compared to the heterotetramer with CNGB1. The channel binds Ca(2+)-bound CALM1 via CaM1 and CaM2 regions of the CNGB1 subunit; this interaction modulates the affinity of the channel for cNMPs in response to intracellular Ca(2+) levels.

The protein resides in the cell membrane. The catalysed reaction is Ca(2+)(in) = Ca(2+)(out). It carries out the reaction Na(+)(in) = Na(+)(out). It catalyses the reaction K(+)(in) = K(+)(out). The enzyme catalyses NH4(+)(in) = NH4(+)(out). The catalysed reaction is Rb(+)(in) = Rb(+)(out). It carries out the reaction Li(+)(in) = Li(+)(out). It catalyses the reaction Cs(+)(in) = Cs(+)(out). Pore-forming subunit of the rod cyclic nucleotide-gated channel. Mediates rod photoresponses at dim light converting transient changes in intracellular cGMP levels into electrical signals. In the dark, cGMP levels are high and keep the channel open enabling a steady inward current carried by Na(+) and Ca(2+) ions that leads to membrane depolarization and neurotransmitter release from synaptic terminals. Upon photon absorption cGMP levels decline leading to channel closure and membrane hyperpolarization that ultimately slows neurotransmitter release and signals the presence of light, the end point of the phototransduction cascade. Conducts cGMP- and cAMP-gated ion currents, with permeability for monovalent and divalent cations. The selectivity for Ca(2+) over Na(+) increases with cGMP concentrations, whereas the selectivity among monovalent ions is independent of the cGMP levels. The chain is Cyclic nucleotide-gated channel alpha-1 from Canis lupus familiaris (Dog).